The primary structure comprises 117 residues: Ribosome-binding factor A (117 aa).

This sequence belongs to the RbfA family. As to quaternary structure, monomer. Binds 30S ribosomal subunits, but not 50S ribosomal subunits or 70S ribosomes.

It is found in the cytoplasm. In terms of biological role, one of several proteins that assist in the late maturation steps of the functional core of the 30S ribosomal subunit. Associates with free 30S ribosomal subunits (but not with 30S subunits that are part of 70S ribosomes or polysomes). Required for efficient processing of 16S rRNA. May interact with the 5'-terminal helix region of 16S rRNA. The polypeptide is Ribosome-binding factor A (Streptococcus suis (strain 98HAH33)).